The sequence spans 394 residues: Phosphopentomutase (394 aa).

The Mn(2+) site is built by aspartate 14, aspartate 287, histidine 292, aspartate 328, histidine 329, and histidine 340.

Belongs to the phosphopentomutase family. Mn(2+) is required as a cofactor.

It localises to the cytoplasm. The catalysed reaction is 2-deoxy-alpha-D-ribose 1-phosphate = 2-deoxy-D-ribose 5-phosphate. The enzyme catalyses alpha-D-ribose 1-phosphate = D-ribose 5-phosphate. Its pathway is carbohydrate degradation; 2-deoxy-D-ribose 1-phosphate degradation; D-glyceraldehyde 3-phosphate and acetaldehyde from 2-deoxy-alpha-D-ribose 1-phosphate: step 1/2. Functionally, isomerase that catalyzes the conversion of deoxy-ribose 1-phosphate (dRib-1-P) and ribose 1-phosphate (Rib-1-P) to deoxy-ribose 5-phosphate (dRib-5-P) and ribose 5-phosphate (Rib-5-P), respectively. In Listeria innocua serovar 6a (strain ATCC BAA-680 / CLIP 11262), this protein is Phosphopentomutase.